The sequence spans 230 residues: Urease accessory protein UreE (230 aa).

Residues 197-230 (LHIHAIHSHGDGDSHNHDHDHSHSHGDHDHDHKH) are disordered. Residues 204 to 230 (SHGDGDSHNHDHDHSHSHGDHDHDHKH) are compositionally biased toward basic and acidic residues.

The protein belongs to the UreE family.

It localises to the cytoplasm. Functionally, involved in urease metallocenter assembly. Binds nickel. Probably functions as a nickel donor during metallocenter assembly. This is Urease accessory protein UreE from Yersinia aldovae.